The primary structure comprises 331 residues: Ketol-acid reductoisomerase (NADP(+)) (331 aa).

The KARI N-terminal Rossmann domain occupies A2 to T182. NADP(+) contacts are provided by residues Y25–Q28, S51, and D83–Q86. H108 is a catalytic residue. G134 provides a ligand contact to NADP(+). The KARI C-terminal knotted domain occupies T183–L329. Positions 191, 195, 227, and 231 each coordinate Mg(2+). S252 contacts substrate.

This sequence belongs to the ketol-acid reductoisomerase family. The cofactor is Mg(2+).

The catalysed reaction is (2R)-2,3-dihydroxy-3-methylbutanoate + NADP(+) = (2S)-2-acetolactate + NADPH + H(+). It catalyses the reaction (2R,3R)-2,3-dihydroxy-3-methylpentanoate + NADP(+) = (S)-2-ethyl-2-hydroxy-3-oxobutanoate + NADPH + H(+). It functions in the pathway amino-acid biosynthesis; L-isoleucine biosynthesis; L-isoleucine from 2-oxobutanoate: step 2/4. The protein operates within amino-acid biosynthesis; L-valine biosynthesis; L-valine from pyruvate: step 2/4. Involved in the biosynthesis of branched-chain amino acids (BCAA). Catalyzes an alkyl-migration followed by a ketol-acid reduction of (S)-2-acetolactate (S2AL) to yield (R)-2,3-dihydroxy-isovalerate. In the isomerase reaction, S2AL is rearranged via a Mg-dependent methyl migration to produce 3-hydroxy-3-methyl-2-ketobutyrate (HMKB). In the reductase reaction, this 2-ketoacid undergoes a metal-dependent reduction by NADPH to yield (R)-2,3-dihydroxy-isovalerate. The sequence is that of Ketol-acid reductoisomerase (NADP(+)) from Ruminiclostridium cellulolyticum (strain ATCC 35319 / DSM 5812 / JCM 6584 / H10) (Clostridium cellulolyticum).